The following is a 444-amino-acid chain: uncharacterized protein (444 aa).

This is an uncharacterized protein from Saccharomyces cerevisiae (strain ATCC 204508 / S288c) (Baker's yeast).